The chain runs to 704 residues: Elongation factor G (704 aa).

One can recognise a tr-type G domain in the interval 8–290 (EKYRNIGICA…GVVRYLPAPN (283 aa)). Residues 17–24 (AHVDAGKT), 88–92 (DTPGH), and 142–145 (NKMD) each bind GTP.

It belongs to the TRAFAC class translation factor GTPase superfamily. Classic translation factor GTPase family. EF-G/EF-2 subfamily.

The protein localises to the cytoplasm. Catalyzes the GTP-dependent ribosomal translocation step during translation elongation. During this step, the ribosome changes from the pre-translocational (PRE) to the post-translocational (POST) state as the newly formed A-site-bound peptidyl-tRNA and P-site-bound deacylated tRNA move to the P and E sites, respectively. Catalyzes the coordinated movement of the two tRNA molecules, the mRNA and conformational changes in the ribosome. This chain is Elongation factor G, found in Francisella tularensis subsp. tularensis (strain FSC 198).